We begin with the raw amino-acid sequence, 334 residues long: Nucleoid-associated protein Pfl01_0983 (334 aa).

This sequence belongs to the YejK family.

It localises to the cytoplasm. It is found in the nucleoid. The sequence is that of Nucleoid-associated protein Pfl01_0983 from Pseudomonas fluorescens (strain Pf0-1).